Here is a 278-residue protein sequence, read N- to C-terminus: TATA box-binding protein-associated factor RNA polymerase I subunit D (278 aa).

2 disordered regions span residues 20–71 (ANRS…SSFE) and 88–116 (KKRY…RNPI). The span at 22 to 33 (RSDNSSDSSLFK) shows a compositional bias: polar residues. Phosphoserine is present on Ser-23. Over residues 88 to 99 (KKRYKKKKKRRY) the composition is skewed to basic residues. 2 positions are modified to phosphoserine: Ser-138 and Ser-234.

In terms of assembly, component of the transcription factor SL1/TIF-IB complex, composed of TBP and at least TAF1A, TAF1B, TAF1C and TAF1D. Interacts with UBTF.

Its subcellular location is the nucleus. In terms of biological role, component of the transcription factor SL1/TIF-IB complex, which is involved in the assembly of the PIC (preinitiation complex) during RNA polymerase I-dependent transcription. The rate of PIC formation probably is primarily dependent on the rate of association of SL1/TIF-IB with the rDNA promoter. SL1/TIF-IB is involved in stabilization of nucleolar transcription factor 1/UBTF on rDNA. Formation of SL1/TIF-IB excludes the association of TBP with TFIID subunits. This is TATA box-binding protein-associated factor RNA polymerase I subunit D (TAF1D) from Homo sapiens (Human).